Consider the following 394-residue polypeptide: Elongation factor Tu (394 aa).

The 195-residue stretch at 10 to 204 (KPHVNIGTIG…AVDSWIPLPE (195 aa)) folds into the tr-type G domain. The interval 19-26 (GHVDHGKT) is G1. Position 19–26 (19–26 (GHVDHGKT)) interacts with GTP. T26 is a binding site for Mg(2+). The interval 60-64 (GITIN) is G2. The G3 stretch occupies residues 81 to 84 (DCPG). GTP-binding positions include 81-85 (DCPGH) and 136-139 (NKCD). The interval 136–139 (NKCD) is G4. Positions 174–176 (SGL) are G5.

Belongs to the TRAFAC class translation factor GTPase superfamily. Classic translation factor GTPase family. EF-Tu/EF-1A subfamily. As to quaternary structure, monomer.

It localises to the cytoplasm. The catalysed reaction is GTP + H2O = GDP + phosphate + H(+). Its function is as follows. GTP hydrolase that promotes the GTP-dependent binding of aminoacyl-tRNA to the A-site of ribosomes during protein biosynthesis. The sequence is that of Elongation factor Tu from Ureaplasma urealyticum serovar 10 (strain ATCC 33699 / Western).